An 84-amino-acid chain; its full sequence is Large ribosomal subunit protein bL27 (84 aa).

It belongs to the bacterial ribosomal protein bL27 family.

The sequence is that of Large ribosomal subunit protein bL27 from Salinispora tropica (strain ATCC BAA-916 / DSM 44818 / JCM 13857 / NBRC 105044 / CNB-440).